We begin with the raw amino-acid sequence, 170 residues long: UPF0690 protein C1orf52 homolog (170 aa).

Disordered regions lie at residues methionine 1–leucine 56 and serine 124–valine 170. Positions aspartate 46 to leucine 56 are enriched in basic and acidic residues. Positions glutamate 144–glutamine 159 are enriched in acidic residues.

Belongs to the UPF0690 family.

This chain is UPF0690 protein C1orf52 homolog, found in Xenopus tropicalis (Western clawed frog).